The primary structure comprises 423 residues: Protein TylM3 (423 aa).

Residues methionine 1–alanine 21 show a composition bias toward low complexity. 2 disordered regions span residues methionine 1–arginine 26 and glycine 117–proline 149. The span at arginine 139–proline 149 shows a compositional bias: basic and acidic residues.

It belongs to the cytochrome P450 family.

It functions in the pathway antibiotic biosynthesis; tylosin biosynthesis. In terms of biological role, involved in the biosynthesis of the macrolide antibiotic tylosin derived from the polyketide lactone tylactone. TylM3 is required for the glycosylation of the 5-hydroxyl group of tylactone to yield 5-O-mycaminosytylactone. The sequence is that of Protein TylM3 from Streptomyces fradiae (Streptomyces roseoflavus).